The primary structure comprises 321 residues: Peroxidase 5 (321 aa).

Positions 1-24 (MERFSLRFVLMMVSIILTSSICQA) are cleaved as a signal peptide. The residue at position 25 (glutamine 25) is a Pyrrolidone carboxylic acid. 4 disulfide bridges follow: cysteine 35–cysteine 115, cysteine 68–cysteine 73, cysteine 121–cysteine 317, and cysteine 201–cysteine 227. Catalysis depends on histidine 66, which acts as the Proton acceptor. Positions 67, 70, 72, 74, and 76 each coordinate Ca(2+). Substrate is bound at residue proline 164. Position 194 (histidine 194) interacts with heme b. Threonine 195 contributes to the Ca(2+) binding site. N-linked (GlcNAc...) asparagine glycosylation occurs at asparagine 211. Ca(2+)-binding residues include aspartate 240, threonine 243, and aspartate 248. The N-linked (GlcNAc...) asparagine glycan is linked to asparagine 285.

The protein belongs to the peroxidase family. Classical plant (class III) peroxidase subfamily. Heme b is required as a cofactor. Ca(2+) serves as cofactor.

The protein resides in the secreted. It carries out the reaction 2 a phenolic donor + H2O2 = 2 a phenolic radical donor + 2 H2O. Its function is as follows. Removal of H(2)O(2), oxidation of toxic reductants, biosynthesis and degradation of lignin, suberization, auxin catabolism, response to environmental stresses such as wounding, pathogen attack and oxidative stress. These functions might be dependent on each isozyme/isoform in each plant tissue. The chain is Peroxidase 5 (PER5) from Arabidopsis thaliana (Mouse-ear cress).